Consider the following 379-residue polypeptide: Alanine racemase (379 aa).

Lys35 acts as the Proton acceptor; specific for D-alanine in catalysis. The residue at position 35 (Lys35) is an N6-(pyridoxal phosphate)lysine. Position 133 (Arg133) interacts with substrate. Residue Tyr265 is the Proton acceptor; specific for L-alanine of the active site. Residue Met312 coordinates substrate.

It belongs to the alanine racemase family. The cofactor is pyridoxal 5'-phosphate.

It carries out the reaction L-alanine = D-alanine. It functions in the pathway amino-acid biosynthesis; D-alanine biosynthesis; D-alanine from L-alanine: step 1/1. Its function is as follows. Catalyzes the interconversion of L-alanine and D-alanine. May also act on other amino acids. The sequence is that of Alanine racemase (alr) from Treponema denticola (strain ATCC 35405 / DSM 14222 / CIP 103919 / JCM 8153 / KCTC 15104).